Here is a 216-residue protein sequence, read N- to C-terminus: Small ribosomal subunit protein uS3c (216 aa).

In terms of domain architecture, KH type-2 spans 43–116 (IKNYVQKNMR…RLNIAITRVA (74 aa)).

It belongs to the universal ribosomal protein uS3 family. Part of the 30S ribosomal subunit.

It localises to the plastid. The protein resides in the chloroplast. In Drimys granadensis, this protein is Small ribosomal subunit protein uS3c (rps3).